We begin with the raw amino-acid sequence, 400 residues long: Large envelope protein (400 aa).

Residue Met1 is modified to N-acetylmethionine. The N-myristoyl glycine; by host moiety is linked to residue Gly2. Positions 2–119 (GAPLSTARRG…PPLRDTHPQA (118 aa)) are pre-S1. Residues 2–174 (GAPLSTARRG…FSKTGDPAMN (173 aa)) form a pre-S region. Residues 2–181 (GAPLSTARRG…AMNMENITSG (180 aa)) lie on the Virion surface; in external conformation side of the membrane. Topologically, residues 2 to 253 (GAPLSTARRG…PGYRWMCLRR (252 aa)) are intravirion; in internal conformation. N-linked (GlcNAc...) asparagine glycosylation is present at Pro4. The tract at residues 70-115 (PHGGLLGWSPQAQGILTTSPPDPPPASTNRRSGRKPTPVSPPLRDT) is disordered. The segment covering 79 to 88 (PQAQGILTTS) has biased composition (polar residues). Residues 120 to 174 (MQWNSTQFHQALLDPRVRGLYFPAGGSSSETQNPAPTIASLTSSIFSKTGDPAMN) form a pre-S2 region. A helical membrane pass occupies residues 182–202 (LLRPLLVLQAVCFLLTKILTI). Over 203 to 253 (PQSLDSWWTSLNFLGVPPGCPGQNSQSPISNHLPTSCPPTCPGYRWMCLRR) the chain is Intravirion; in external conformation. Residues 254–274 (FIIFLFILLLCLIFLLVLLDY) form a helical membrane-spanning segment. The Virion surface portion of the chain corresponds to 275–348 (QGMLPVCPLL…WASARFSWLS (74 aa)). The N-linked (GlcNAc...) asparagine; by host glycan is linked to Asn320. The helical transmembrane segment at 349–369 (LLVQFVQWCVGLSPTVWLLVI) threads the bilayer. Residues 370–375 (WMIWYW) lie on the Intravirion side of the membrane. Residues 376-398 (GPNLCSILSPFIPLLPIFCYLWA) form a helical membrane-spanning segment. The Virion surface portion of the chain corresponds to 399–400 (SI).

The protein belongs to the orthohepadnavirus major surface antigen family. As to quaternary structure, in its internal form (Li-HBsAg), interacts with the capsid protein and with the isoform S. Interacts with host chaperone CANX. Associates with host chaperone CANX through its pre-S2 N glycan; this association may be essential for isoform M proper secretion. In terms of assembly, interacts with isoform L. Interacts with the antigens of satellite virus HDV (HDVAgs); this interaction is required for encapsidation of HDV genomic RNA. Isoform M is N-terminally acetylated by host at a ratio of 90%, and N-glycosylated by host at the pre-S2 region. Post-translationally, myristoylated.

Its subcellular location is the virion membrane. Its function is as follows. The large envelope protein exists in two topological conformations, one which is termed 'external' or Le-HBsAg and the other 'internal' or Li-HBsAg. In its external conformation the protein attaches the virus to cell receptors and thereby initiating infection. This interaction determines the species specificity and liver tropism. This attachment induces virion internalization predominantly through caveolin-mediated endocytosis. The large envelope protein also assures fusion between virion membrane and endosomal membrane. In its internal conformation the protein plays a role in virion morphogenesis and mediates the contact with the nucleocapsid like a matrix protein. The middle envelope protein plays an important role in the budding of the virion. It is involved in the induction of budding in a nucleocapsid independent way. In this process the majority of envelope proteins bud to form subviral lipoprotein particles of 22 nm of diameter that do not contain a nucleocapsid. The protein is Large envelope protein of Hepatitis B virus genotype H (isolate United States/LAS2523/2002) (HBV-H).